The primary structure comprises 256 residues: Acetylglutamate kinase (256 aa).

Substrate is bound by residues 40 to 41, Arg-62, and Asn-154; that span reads GG.

It belongs to the acetylglutamate kinase family. ArgB subfamily.

The protein resides in the cytoplasm. It catalyses the reaction N-acetyl-L-glutamate + ATP = N-acetyl-L-glutamyl 5-phosphate + ADP. It participates in amino-acid biosynthesis; L-arginine biosynthesis; N(2)-acetyl-L-ornithine from L-glutamate: step 2/4. Catalyzes the ATP-dependent phosphorylation of N-acetyl-L-glutamate. This is Acetylglutamate kinase from Staphylococcus aureus (strain MRSA252).